We begin with the raw amino-acid sequence, 247 residues long: MGYLTSSFVLFFLLCVTYTYAATIEVRNNCPYTVWAASTPIGGGRRLNRGQTWVINAPRGTKMARIWGRTGCNFNAAGRGTCQTGDCGGVLQCTGWGKPPNTLAEYALDQFSNLDFWDISLVDGFNIPMTFAPTKPSGGKCHAIHCTANINGECPRALKVPGGCNNPCTTFGGQQYCCTQGPCGPTELSKFFKKRCPDAYSYPQDDPTSTFTCPGGSTNYRVVFCPNGVADPNFPLEMPASTDEVAK.

Residues 1–21 (MGYLTSSFVLFFLLCVTYTYA) form the signal peptide. 8 disulfide bridges follow: Cys-30-Cys-225, Cys-72-Cys-82, Cys-87-Cys-93, Cys-141-Cys-213, Cys-146-Cys-196, Cys-154-Cys-164, Cys-168-Cys-177, and Cys-178-Cys-183.

It belongs to the thaumatin family. Highest levels of both isoforms found in the outer pericarp, with smaller amounts in the inner pericarp.

The protein resides in the cytoplasm. It localises to the vacuole. It catalyses the reaction Endohydrolysis of (1-&gt;3)- or (1-&gt;4)-linkages in beta-D-glucans when the glucose residue whose reducing group is involved in the linkage to be hydrolyzed is itself substituted at C-3.. Has antifungal activity against P.betae and F.dahliae. May be involved in disease resistance in tomatoes and/or have a possible role in fruit development and ripening. Binds to beta-glucans and exhibits beta-1,3-D-glucanase activity. This is Osmotin-like protein NP24-I from Solanum lycopersicum (Tomato).